The sequence spans 434 residues: Ribosomal RNA-processing protein 14 (434 aa).

An N-acetylserine modification is found at Ser2. Basic and acidic residues-rich tracts occupy residues 32-58 (KSQEQWKAKKKTKEQSKNDKLKKLDPE), 70-79 (VMKKKEKDAK), and 95-105 (KQKEATSKVEG). The interval 32–257 (KSQEQWKAKK…RFKKGKKDSE (226 aa)) is disordered. Acidic residues predominate over residues 121–140 (PDEDEEEEEDIKVIFDDEGN). Positions 144–178 (LESKKDTTEPDRSVEKKSITEEEKLQRKKNLEALR) are enriched in basic and acidic residues. 2 coiled-coil regions span residues 162–230 (ITEE…EIAS) and 293–360 (AKND…QKRK). A compositionally biased stretch (acidic residues) spans 220 to 241 (EQEQDQDEIASDSDMEDIDSDL). Residues 375–392 (TISERQKRREENLRIRKD) are compositionally biased toward basic and acidic residues. The segment at 375-434 (TISERQKRREENLRIRKDNKGKKRNKQEKMKRKYVGSAVPKKRAGFEGRLKTGKKKGGPK) is disordered. Basic residues-rich tracts occupy residues 393–408 (NKGKKRNKQEKMKRKY) and 425–434 (KTGKKKGGPK).

This sequence belongs to the SURF6 family. In terms of assembly, component of the 90S and 60S pre-ribosomal particles.

It is found in the nucleus. The protein localises to the nucleolus. Its function is as follows. Involved in ribosome biogenesis and cell polarity. Required for the synthesis of both 40S and 60S ribosomal subunits and may also play some direct role in correct positioning of the mitotic spindle during mitosis. This is Ribosomal RNA-processing protein 14 (RRP14) from Saccharomyces cerevisiae (strain ATCC 204508 / S288c) (Baker's yeast).